Reading from the N-terminus, the 177-residue chain is Putative HTH-type transcriptional regulator YvaV (177 aa).

Positions L49–A73 form a DNA-binding region, H-T-H motif.

The protein belongs to the GbsR family.

This Bacillus subtilis (strain 168) protein is Putative HTH-type transcriptional regulator YvaV (yvaV).